The primary structure comprises 131 residues: D-ribose pyranase (131 aa).

His-20 serves as the catalytic Proton donor. Residues Asp-28, His-98, and 120-122 (YAN) contribute to the substrate site.

It belongs to the RbsD / FucU family. RbsD subfamily. As to quaternary structure, homodecamer.

The protein localises to the cytoplasm. It carries out the reaction beta-D-ribopyranose = beta-D-ribofuranose. The protein operates within carbohydrate metabolism; D-ribose degradation; D-ribose 5-phosphate from beta-D-ribopyranose: step 1/2. In terms of biological role, catalyzes the interconversion of beta-pyran and beta-furan forms of D-ribose. This chain is D-ribose pyranase, found in Clostridium novyi (strain NT).